Consider the following 354-residue polypeptide: Probable L-ascorbate-6-phosphate lactonase UlaG (354 aa).

This sequence belongs to the UlaG family. It depends on a divalent metal cation as a cofactor.

It is found in the cytoplasm. The enzyme catalyses L-ascorbate 6-phosphate + H2O = 3-dehydro-L-gulonate 6-phosphate. It participates in cofactor degradation; L-ascorbate degradation; D-xylulose 5-phosphate from L-ascorbate: step 1/4. Functionally, probably catalyzes the hydrolysis of L-ascorbate-6-P into 3-keto-L-gulonate-6-P. Is essential for L-ascorbate utilization under anaerobic conditions. In Escherichia coli O127:H6 (strain E2348/69 / EPEC), this protein is Probable L-ascorbate-6-phosphate lactonase UlaG.